A 506-amino-acid chain; its full sequence is Hexokinase-6 (506 aa).

A helical membrane pass occupies residues 6–26; it reads VVGTAVVVCAAAAAAVGVAVV. Residues 43–497 enclose the Hexokinase domain; the sequence is RRAAAVIEEV…SGIGAALLAA (455 aa). A hexokinase small subdomain region spans residues 98–236; sequence TGDEHGLFYA…GLDMKVTALV (139 aa). Residues glycine 112, threonine 113, and asparagine 114 each contribute to the ADP site. D-glucose contacts are provided by threonine 202, lysine 203, asparagine 237, and aspartate 238. Residues 237-486 form a hexokinase large subdomain region; the sequence is NDTVGTLAGG…SSVVVKLAND (250 aa). Threonine 261 contributes to the ADP binding site. D-glucose contacts are provided by asparagine 264, glutamate 292, and glutamate 323. Glycine 451 serves as a coordination point for ADP.

It belongs to the hexokinase family. Expressed in roots, leaves, flowers, immature seeds and endosperm.

The protein resides in the plastid. It localises to the chloroplast outer membrane. It carries out the reaction a D-hexose + ATP = a D-hexose 6-phosphate + ADP + H(+). The catalysed reaction is D-fructose + ATP = D-fructose 6-phosphate + ADP + H(+). It catalyses the reaction D-glucose + ATP = D-glucose 6-phosphate + ADP + H(+). Its pathway is carbohydrate metabolism; hexose metabolism. The protein operates within carbohydrate degradation; glycolysis; D-glyceraldehyde 3-phosphate and glycerone phosphate from D-glucose: step 1/4. Functionally, fructose and glucose phosphorylating enzyme. Functions as a glucose sensor for plant growth and photosynthesis. The sequence is that of Hexokinase-6 (HXK6) from Oryza sativa subsp. japonica (Rice).